A 153-amino-acid chain; its full sequence is ORM1-like protein 3 (153 aa).

The interval 1 to 17 is important for ceramide level-sensing; that stretch reads MNVGTAHSEVNPNTRVM. The Cytoplasmic segment spans residues 1 to 21; that stretch reads MNVGTAHSEVNPNTRVMNSRG. 2 helical membrane passes run 22-42 and 43-63; these read IWLSYVLAIGLLHVVLLSIPF and VSVPVVWTLTNLIHNLGMYIF. Topologically, residues 64–94 are cytoplasmic; sequence LHTVKGTPFETPDQGKARLLTHWEQMDYGVQ. Residues 95-117 traverse the membrane as a helical segment; the sequence is FTASRKFLTITPIVLYFLTSFYT. Residues 118-121 are Extracellular-facing; sequence KYDQ. Residues 122–142 form a helical membrane-spanning segment; it reads VHFILNTVSLMTVLIPKLPQL. Pro137 is modified (hydroxyproline). Topologically, residues 143 to 153 are cytoplasmic; sequence HGVRIFGINKY.

The protein belongs to the ORM family. As to quaternary structure, ceramide-sensitive subunit of the serine palmitoyltransferase (SPT) complex, which is also composed of SPTLC1, SPTLC2/3 and SPTSSA/B. In terms of processing, when hydroxylated at Pro-137, ubiquitinated via 'Lys-48'-linkage, leading to proteasomal degradation. In endothelial cells, ORMDL3 proteasomal degradation is controlled by the sphingosine 1-phosphate receptor signaling pathway.

It localises to the endoplasmic reticulum membrane. In terms of biological role, plays an essential role in the homeostatic regulation of sphingolipid de novo biosynthesis by modulating the activity of the serine palmitoyltransferase (SPT) in response to ceramide levels. When complexed to SPT, the binding of ceramides to its N-terminus stabilizes a conformation that block SPT substrate entry, hence preventing SPT catalytic activity. Through this mechanism, maintains ceramide levels at sufficient concentrations for the production of complex sphingolipids, but which prevents the accumulation of ceramides to levels that trigger apoptosis. In Mus musculus (Mouse), this protein is ORM1-like protein 3 (Ormdl3).